The sequence spans 95 residues: Cytochrome b-c1 complex subunit 8, mitochondrial (95 aa).

The helical transmembrane segment at 57 to 74 (FLYVAIPFVVVWSIWTRA) threads the bilayer.

The protein belongs to the UQCRQ/QCR8 family. As to quaternary structure, component of the ubiquinol-cytochrome c oxidoreductase (cytochrome b-c1 complex, complex III, CIII), a multisubunit enzyme composed of 10 subunits. The complex is composed of 3 respiratory subunits cytochrome b (COB), cytochrome c1 (CYT1) and Rieske protein (RIP1), 2 core protein subunits COR1 and QCR2, and 5 low-molecular weight protein subunits QCR6, QCR7, QCR8, QCR9 and QCR10. The complex exists as an obligatory dimer and forms supercomplexes (SCs) in the inner mitochondrial membrane with a monomer or a dimer of cytochrome c oxidase (complex IV, CIV), resulting in 2 different assemblies (supercomplexes III(2)IV and III(2)IV(2)).

It is found in the membrane. The protein localises to the mitochondrion inner membrane. In terms of biological role, component of the ubiquinol-cytochrome c oxidoreductase, a multisubunit transmembrane complex that is part of the mitochondrial electron transport chain which drives oxidative phosphorylation. The complex plays an important role in the uptake of multiple carbon sources present in different host niches. This chain is Cytochrome b-c1 complex subunit 8, mitochondrial, found in Candida albicans (strain SC5314 / ATCC MYA-2876) (Yeast).